The primary structure comprises 144 residues: Large ribosomal subunit protein uL16 (144 aa).

Residues 1 to 19 show a composition bias toward basic residues; that stretch reads MLLPKRVKYRRQHRPKTTG. The disordered stretch occupies residues 1 to 23; that stretch reads MLLPKRVKYRRQHRPKTTGRSKG.

This sequence belongs to the universal ribosomal protein uL16 family. Part of the 50S ribosomal subunit.

Functionally, binds 23S rRNA and is also seen to make contacts with the A and possibly P site tRNAs. The chain is Large ribosomal subunit protein uL16 from Staphylococcus epidermidis (strain ATCC 35984 / DSM 28319 / BCRC 17069 / CCUG 31568 / BM 3577 / RP62A).